We begin with the raw amino-acid sequence, 292 residues long: N-acetylneuraminate lyase (292 aa).

Aceneuramate contacts are provided by serine 47 and threonine 48. The Proton donor role is filled by tyrosine 136. Lysine 164 functions as the Schiff-base intermediate with substrate in the catalytic mechanism. Aceneuramate-binding residues include threonine 166, glycine 188, aspartate 190, glutamate 191, and serine 207.

Belongs to the DapA family. NanA subfamily. Homotetramer.

The protein localises to the cytoplasm. It carries out the reaction aceneuramate = aldehydo-N-acetyl-D-mannosamine + pyruvate. The protein operates within amino-sugar metabolism; N-acetylneuraminate degradation; D-fructose 6-phosphate from N-acetylneuraminate: step 1/5. Its function is as follows. Catalyzes the reversible aldol cleavage of N-acetylneuraminic acid (sialic acid; Neu5Ac) to form pyruvate and N-acetylmannosamine (ManNAc) via a Schiff base intermediate. In Actinobacillus pleuropneumoniae serotype 3 (strain JL03), this protein is N-acetylneuraminate lyase.